The following is a 233-amino-acid chain: Mediator of RNA polymerase II transcription subunit 8 (233 aa).

Positions 204–233 (RGEVDRGSSSQEGLSTNNEQSGDKDIIMAD) are disordered. The segment covering 210–223 (GSSSQEGLSTNNEQ) has biased composition (polar residues). Residues 224 to 233 (SGDKDIIMAD) are compositionally biased toward basic and acidic residues.

The protein belongs to the Mediator complex subunit 8 family. As to quaternary structure, component of the Mediator complex.

It localises to the nucleus. Component of the Mediator complex, a coactivator involved in the regulated transcription of nearly all RNA polymerase II-dependent genes. Mediator functions as a bridge to convey information from gene-specific regulatory proteins to the basal RNA polymerase II transcription machinery. Mediator is recruited to promoters by direct interactions with regulatory proteins and serves as a scaffold for the assembly of a functional preinitiation complex with RNA polymerase II and the general transcription factors. This Candida glabrata (strain ATCC 2001 / BCRC 20586 / JCM 3761 / NBRC 0622 / NRRL Y-65 / CBS 138) (Yeast) protein is Mediator of RNA polymerase II transcription subunit 8 (MED8).